We begin with the raw amino-acid sequence, 193 residues long: Protein PATRONUS 1 (193 aa).

The short motif at 14-16 (DEN) is the DEN-box element. Positions 46–49 (RKAL) match the D-box motif.

Interacts directly with the anaphase promoting complex/cyclosome (APC/C) through the CDC27B and CDC20-1 subunits. As to expression, expressed in somatic and reproductive tissues. Expressed in inflorescence, young buds, roots and basal portion of young leaves. Expressed in proliferating cells such as apical meristems of roots and shoots, expanding cotyledons and leaves, root vascular tissues, and in stomatal precursor cells.

Its subcellular location is the nucleus. It localises to the cytoplasm. Its function is as follows. Required for the maintenance of centromeric cohesion during interkinesis, until meiosis II. Required for regular configuration and segregation of sister chromatids in meiosis II. Also required for centromere cohesion during meiosis I. Involved in spindle organization at the end of telophase I and in meiosis II. Required to prevent precocious release of pericentromeric cohesins during meiosis, but not for cohesion establishment and monopolar orientation of kinetochores at meiosis I. Involved also in somatic development. Regulates mitotic cell division and ploidy stability in somatic cell types. May be involved in the organization of microtubules dynamics. Involved in abiotic stresses and mono- or divalent ions tolerance and may play a role in maintaining meristematic activity under saline conditions. PANS1 and GIG1 are part of a network linking centromere cohesion and cell cycle progression through control of APC/C activity. Regulates the number of dividing cells in root meristem and is necessary for the anaphase onset control through an APC/C-mediated pathway. Involved in maintaining correct chromosome arm cohesion under stress conditions. This Arabidopsis thaliana (Mouse-ear cress) protein is Protein PATRONUS 1.